Reading from the N-terminus, the 520-residue chain is Pleckstrin homology domain-containing family A member 8 (520 aa).

Residues 1 to 93 (MEGVLYKWTN…WLVALGSAKA (93 aa)) form the PH domain. Thr139 is modified (phosphothreonine). Ser145 bears the Phosphoserine mark. Thr153 is subject to Phosphothreonine. Residues 275-285 (GEESLGNHDSD) are compositionally biased toward basic and acidic residues. Residues 275–305 (GEESLGNHDSDLAQPELHSTSSSPESHWEED) are disordered. The segment at 311-520 (TFFSTMNTSF…VHGLESDEVV (210 aa)) is glycolipid transfer protein homology domain.

Homodimer. Interacts with ARF1; the interaction together with phosphatidylinositol 4-phosphate binding is required for FAPP2 GlcCer transfer ability.

It localises to the cytoplasm. Its subcellular location is the golgi apparatus. It is found in the trans-Golgi network membrane. The protein resides in the membrane. Functionally, cargo transport protein that is required for apical transport from the trans-Golgi network (TGN). Transports AQP2 from the trans-Golgi network (TGN) to sites of AQP2 phosphorylation. Mediates the non-vesicular transport of glucosylceramide (GlcCer) from the trans-Golgi network (TGN) to the plasma membrane and plays a pivotal role in the synthesis of complex glycosphingolipids. Binding of both phosphatidylinositol 4-phosphate (PIP) and ARF1 are essential for the GlcCer transfer ability. Also required for primary cilium formation, possibly by being involved in the transport of raft lipids to the apical membrane, and for membrane tubulation. In Bos taurus (Bovine), this protein is Pleckstrin homology domain-containing family A member 8 (PLEKHA8).